The primary structure comprises 812 residues: Fibroblast growth factor receptor 1 (812 aa).

A signal peptide spans 1 to 20 (MFSGMSLLLWGVLLGAALSV). Residues 21-371 (ARPPSTLPDE…PALLASPLQL (351 aa)) are Extracellular-facing. Residues 25–118 (STLPDEVAPK…YTVLCSVNVS (94 aa)) form the Ig-like C2-type 1 domain. Cysteines 54 and 100 form a disulfide. 9 N-linked (GlcNAc...) asparagine glycosylation sites follow: Asn76, Asn116, Asn133, Asn223, Asn236, Asn260, Asn292, Asn313, and Asn326. A disordered region spans residues 121-153 (LPSAEDDDEDDDNSSSEEKAAENSKPNRPLWSH). The span at 124–135 (AEDDDEDDDNSS) shows a compositional bias: acidic residues. Ig-like C2-type domains lie at 154-242 (PEKM…YQLD) and 251-353 (PILQ…AWLT). A disulfide bond links Cys174 and Cys226. An intrachain disulfide couples Cys273 to Cys337. The chain crosses the membrane as a helical span at residues 372–393 (EIIIYCTGAAFVSAMVVTIIIF). Topologically, residues 394-812 (KMKHPSKKSD…KYSNGGLKKR (419 aa)) are cytoplasmic. Position 457 is a phosphotyrosine; by autocatalysis (Tyr457). In terms of domain architecture, Protein kinase spans 472–761 (LILGKPLGEG…LALSSNQEYL (290 aa)). Residues 478 to 484 (LGEGCFG), Lys508, 556 to 558 (EYT), and Asn562 contribute to the ATP site. Phosphotyrosine; by autocatalysis occurs at positions 577 and 579. The active-site Proton acceptor is Asp617. Residues Arg621 and Asp635 each contribute to the ATP site. 4 positions are modified to phosphotyrosine; by autocatalysis: Tyr647, Tyr648, Tyr724, and Tyr760. Residues 784–812 (SGEDSMFSHDPLPDEPCLPKYSNGGLKKR) form a disordered region.

Belongs to the protein kinase superfamily. Tyr protein kinase family. Fibroblast growth factor receptor subfamily. In terms of assembly, monomer. Homodimer after ligand binding. Interacts with il17rd. Post-translationally, autophosphorylated. Binding of FGF family members together with heparan sulfate proteoglycan or heparin promotes receptor dimerization and autophosphorylation on tyrosine residues. Autophosphorylation occurs in trans between the two FGFR molecules present in the dimer and proceeds in a highly ordered manner. Phosphotyrosine residues provide docking sites for interacting proteins and so are crucial for FGFR1 function and its regulation. In terms of processing, ubiquitinated. FGFR1 is rapidly ubiquitinated after autophosphorylation, leading to internalization and degradation. N-glycosylated in the endoplasmic reticulum. The N-glycan chains undergo further maturation to an Endo H-resistant form in the Golgi apparatus.

Its subcellular location is the cell membrane. It is found in the nucleus. The protein localises to the cytoplasm. It localises to the cytosol. The protein resides in the cytoplasmic vesicle. The catalysed reaction is L-tyrosyl-[protein] + ATP = O-phospho-L-tyrosyl-[protein] + ADP + H(+). With respect to regulation, present in an inactive conformation in the absence of bound ligand. Ligand binding leads to dimerization and activation by sequential autophosphorylation on tyrosine residues. In terms of biological role, tyrosine-protein kinase that acts as a cell-surface receptor for fibroblast growth factors and plays an essential role in the regulation of embryonic development, cell proliferation, differentiation and migration. Required for normal mesoderm patterning and normal skeletogenesis. Phosphorylates PLCG1, FRS2, GAB1 and SHB. Ligand binding leads to the activation of several signaling cascades. Activation of PLCG1 leads to the production of the cellular signaling molecules diacylglycerol and inositol-1,4,5-trisphosphate. Phosphorylation of FRS2 triggers recruitment of GRB2, GAB1, PIK3R1 and SOS1, and mediates activation of RAS, MAPK1/ERK2, MAPK3/ERK1 and the MAP kinase signaling pathway, as well as of the AKT1 signaling pathway. Promotes phosphorylation of SHC1, STAT1 and PTPN11/SHP2. In the nucleus, enhances RPS6KA1 and CREB1 activity and contributes to the regulation of transcription. FGFR1 signaling is down-regulated by ubiquitination, internalization and degradation. This chain is Fibroblast growth factor receptor 1 (fgfr1), found in Xenopus laevis (African clawed frog).